Consider the following 968-residue polypeptide: MPFTLGQRWISDTESELGLGTVVAMDARTVTLLFPSTGENRLYARSDSPVTRVMFNPGDTITSHEGWQLHIDEVKEENGLLVYVGTRLDTEETNVTLREVLLDSKLVFSKPQDRLFAGQIDRMDRFALRYRARKFQSEQYRMPYSGLRGQRTNLIPHQLNIAHDVGRRHAPRVLLADEVGLGKTIEAGMILHQQLLSGAAERVLIIVPETLQHQWLVEMLRRFNLRFALFDDERYTEAQHDAYNPFETEQLVICSLDFARRNKQRLEHLCDAEWDLLVVDEAHHLVWSTDAPSREYMAIEQLAERVPGVLLLTATPEQLGMESHFARLRLLDPNRFHDFEQFVEEQKNYRPVADAVAMLLAGNKLSNDELNRLGDLIGEQDIEPLLQAANSDRDDAQAARDELVSMLMDRHGTSRVLFRNTRNGVKGFPKRELHTVKLPLPTQYQTAIKVSGIMGARKSAEDRARDMLYPEQIYQEFEGDTGTWWNFDPRVEWLMGYLTSHRSQKVLVICAKATTALQLEQVLREREGIRAAVFHEGMSIIERDRAAAWFAEEDTGAQVLLCSEIGSEGRNFQFASNLVMFDLPFNPDLLEQRIGRLDRIGQAHDIQIHVPYLEKTAQSVLVRWYHEGLDAFEHTCPTGRAIYDSAYASLINYLAAPEETDGFDDLIKSCREQHEALKAQLEQGRDRLLEIHSNGGEKAQQLAQSIEEQDDDTNLIAFAMNLFDIVGINQDDRGDNLIVLTPSDHMLVPDFPGLPEDGCTITFERDVALSREDAQFITWEHPLIRNGLDLILSGDTGSSTISLLKNKALPVGTLLVELVYVVEAQAPKQLQLNRFLPPTPVRMLLDKNGNNLAAQVEFETFNRQLSAVNRHTGSKLVNAVQQDVYAILQLGETQIEQSARALIDNARREADEKLSGELSRLEALRAVNPNIRDDELAAIDSNRQQVLESLNQAGWRLDALRLIVVTHQ.

The 171-residue stretch at 164–334 (DVGRRHAPRV…FARLRLLDPN (171 aa)) folds into the Helicase ATP-binding domain. 177 to 184 (DEVGLGKT) lines the ATP pocket. The DEAH box signature appears at 280-283 (DEAH). The Helicase C-terminal domain occupies 490–685 (RVEWLMGYLT…ALKAQLEQGR (196 aa)).

Belongs to the SNF2/RAD54 helicase family. RapA subfamily. As to quaternary structure, interacts with the RNAP. Has a higher affinity for the core RNAP than for the holoenzyme. Its ATPase activity is stimulated by binding to RNAP.

Its function is as follows. Transcription regulator that activates transcription by stimulating RNA polymerase (RNAP) recycling in case of stress conditions such as supercoiled DNA or high salt concentrations. Probably acts by releasing the RNAP, when it is trapped or immobilized on tightly supercoiled DNA. Does not activate transcription on linear DNA. Probably not involved in DNA repair. In Salmonella newport (strain SL254), this protein is RNA polymerase-associated protein RapA.